Consider the following 429-residue polypeptide: 3-phosphoshikimate 1-carboxyvinyltransferase (429 aa).

3-phosphoshikimate is bound by residues lysine 20, serine 21, and arginine 25. Lysine 20 contacts phosphoenolpyruvate. 2 residues coordinate phosphoenolpyruvate: glycine 89 and arginine 118. Positions 164, 165, 166, 192, 311, and 338 each coordinate 3-phosphoshikimate. Glutamine 166 is a phosphoenolpyruvate binding site. The Proton acceptor role is filled by aspartate 311. Phosphoenolpyruvate-binding residues include arginine 342 and arginine 384.

It belongs to the EPSP synthase family. Monomer.

It localises to the cytoplasm. The enzyme catalyses 3-phosphoshikimate + phosphoenolpyruvate = 5-O-(1-carboxyvinyl)-3-phosphoshikimate + phosphate. Its pathway is metabolic intermediate biosynthesis; chorismate biosynthesis. In terms of biological role, catalyzes the transfer of the enolpyruvyl moiety of phosphoenolpyruvate (PEP) to the 5-hydroxyl of shikimate-3-phosphate (S3P) to produce enolpyruvyl shikimate-3-phosphate and inorganic phosphate. This is 3-phosphoshikimate 1-carboxyvinyltransferase from Methanococcus maripaludis (strain DSM 14266 / JCM 13030 / NBRC 101832 / S2 / LL).